We begin with the raw amino-acid sequence, 349 residues long: MEFTAQQIADYLHGSVEGNPKVRLHDFAKIEEGRSGCLSFLANAKYEHYLYQTQSDAVLVNQDFEPRESVKTTLIRVPNAYTALAQLMQLVDSMKPQRKGVDSTAFVHPSVILPDDCYVGAFAYVSEGASLGTGCSLYPHVYVGSGVSVGEGTILYPHVTVYDGCSIGSRCVIHSGAVIGADGFGFAPNAEGYSKIPQLGNVIIEDDVEIGANTCIDRAVMDSTIIHRGVKLDNLVQIAHNCSVGSHTVFAAQVGMAGSSHVGEWCQFGGQVGLSGHIKVGDRVSLGGQTGLLSNVKSGSTLLGSPGMPLRDMLRASVIFPKLPDMSLRIEQLEKEISELKEICKNNKH.

The Proton acceptor role is filled by His240.

The protein belongs to the transferase hexapeptide repeat family. LpxD subfamily. As to quaternary structure, homotrimer.

It catalyses the reaction a UDP-3-O-[(3R)-3-hydroxyacyl]-alpha-D-glucosamine + a (3R)-hydroxyacyl-[ACP] = a UDP-2-N,3-O-bis[(3R)-3-hydroxyacyl]-alpha-D-glucosamine + holo-[ACP] + H(+). Its pathway is bacterial outer membrane biogenesis; LPS lipid A biosynthesis. Its function is as follows. Catalyzes the N-acylation of UDP-3-O-acylglucosamine using 3-hydroxyacyl-ACP as the acyl donor. Is involved in the biosynthesis of lipid A, a phosphorylated glycolipid that anchors the lipopolysaccharide to the outer membrane of the cell. This Porphyromonas gingivalis (strain ATCC BAA-308 / W83) protein is UDP-3-O-acylglucosamine N-acyltransferase.